The primary structure comprises 128 residues: Flagellar basal body rod protein FlgB (128 aa).

This sequence belongs to the flagella basal body rod proteins family. The basal body constitutes a major portion of the flagellar organelle and consists of a number of rings mounted on a central rod. In Gram-negative bacteria, at least four rings, L, P, S and M are present, whereas Gram-positive bacteria lack the L and P rings. The rod consists of about 26 subunits of FlgG in the distal portion, and FlgB, FlgC and FlgF build up the proximal portion of the rod with about 6 subunits each. Rod assembly occurs by export via the flagellum-specific pathway of its constituent proteins and by their incorporation into the rod structure in the probable order of FlgB, FlgC, FlgF and FlgG. Another protein, FliE, also assembles onto the stable rod structure.

The protein localises to the bacterial flagellum basal body. Functionally, structural component of flagellum, the bacterial motility apparatus. Part of the rod structure of flagellar basal body. This chain is Flagellar basal body rod protein FlgB, found in Cereibacter sphaeroides (strain ATCC 17023 / DSM 158 / JCM 6121 / CCUG 31486 / LMG 2827 / NBRC 12203 / NCIMB 8253 / ATH 2.4.1.) (Rhodobacter sphaeroides).